The chain runs to 501 residues: Type II secretion system protein E (501 aa).

262–269 (GPTGSGKS) lines the ATP pocket. Cys395, Cys398, Cys428, and Cys431 together coordinate Zn(2+).

This sequence belongs to the GSP E family. Forms homooligomers; most probably hexamers. Interacts with ExeL/GspL. Requires Zn(2+) as cofactor.

The protein localises to the cell inner membrane. The enzyme catalyses ATP + H2O + cellular proteinSide 1 = ADP + phosphate + cellular proteinSide 2.. Its function is as follows. ATPase component of the type II secretion system required for the energy-dependent secretion of extracellular factors such as proteases and toxins from the periplasm. Acts as a molecular motor to provide the energy that is required for assembly of the pseudopilus and the extrusion of substrates generated in the cytoplasm. In Aeromonas hydrophila, this protein is Type II secretion system protein E (exeE).